A 312-amino-acid chain; its full sequence is MSAMEAADVFHRARGRTLDAFSSEKEREWKGPFYFVQGADTQFGLMKAWSTGNCDAGGDEWGQEIRLTEQAVEAINKLNPKPKFFVLCGDLVHAMPGTPWRQEQTRDLQRVLKAVDQDIPLVMVSGNHDLGNAPTAETVEEFCQTWGDDYFSFWVGGVLFLVLNSQFLYDASRCPALKQAQDHWLDQQLNIAEQKQCQHAIVFQHIPLFLQSIDEDDDYFNLTKTVRKELAEKLTRAGIRAVFSGHYHRNAGGTYQNLDMVVSSAIGCQLGKDTHGLRVVAITAEKIVHRYYSLDELSQGGVEEDLKELLKE.

Ser-2 is subject to Phosphoserine. Positions 47–250 (KAWSTGNCDA…AVFSGHYHRN (204 aa)) are catalytic. Positions 90, 127, and 246 each coordinate a divalent metal cation. Residue Ser-293 is modified to Phosphoserine.

It belongs to the metallophosphoesterase superfamily. CPPED1 family. A divalent metal cation serves as cofactor.

The protein localises to the cytoplasm. The enzyme catalyses O-phospho-L-seryl-[protein] + H2O = L-seryl-[protein] + phosphate. It carries out the reaction O-phospho-L-threonyl-[protein] + H2O = L-threonyl-[protein] + phosphate. Protein phosphatase that dephosphorylates AKT family kinase specifically at 'Ser-473', blocking cell cycle progression and promoting cell apoptosis. May play an inhibitory role in glucose uptake by adipocytes. This is Serine/threonine-protein phosphatase CPPED1 (Cpped1) from Mus musculus (Mouse).